A 424-amino-acid polypeptide reads, in one-letter code: Serpin-Z2A (424 aa).

The RCL stretch occupies residues 370-394 (GTEAAASTACTIRLLSMSYPEDFVA).

This sequence belongs to the serpin family.

In terms of biological role, probable serine protease inhibitor. This is Serpin-Z2A from Oryza sativa subsp. japonica (Rice).